The sequence spans 5098 residues: Auxin transport protein BIG (5098 aa).

N-acetylalanine is present on Ala2. The next 2 membrane-spanning stretches (helical) occupy residues 1150-1170 and 1458-1478; these read AILLSCILSIRCIVLTINGLL and LAAEEKLLPGLKFIFGVIGTL. The span at 1539–1549 shows a compositional bias: acidic residues; it reads SVDEDEDDGTS. The segment at 1539-1562 is disordered; sequence SVDEDEDDGTSDGEVASLDKEDEE. Residues 1573 to 1644 form a UBR-type zinc finger; it reads KVCTFTSSGS…RGSSCQCLKP (72 aa). The segment at 2613–2672 adopts a ZZ-type zinc-finger fold; sequence SVQYCCDGCSTVPILRRRWHCTVCPDFDLCEACYEVLDADRLPPPHTRDHPMTAIPIEVE. Zn(2+) is bound by residues Cys2618, Cys2621, Cys2633, Cys2636, Cys2642, Cys2645, His2658, and His2662. Residues 2813–2833 traverse the membrane as a helical segment; sequence SSLGEIVILVFMFFTLMLRSW. Residues 3149 to 3174 form a disordered region; the sequence is EVVTGSNRSGSQSVDSKKKKKGEDGH. A compositionally biased stretch (polar residues) spans 3151–3162; it reads VTGSNRSGSQSV. The MYND-type; degenerate zinc-finger motif lies at 3464-3504; sequence CPRCSRPVTDKHGICSNCHENAYQCRQCRNINYENLDSFLC. Coiled coils occupy residues 3537-3557 and 4313-4333; these read KKGLAAIESESENAHKRYQQL and LEILLDMIKSLQDDFKSNQEE. Positions 4569–5098 are UBR4 E3 catalytic module; the sequence is PSVPLILSML…QFVRSAIDKD (530 aa). The HemiRING-type zinc-finger motif lies at 4698 to 4817; it reads GLACMVCREG…WDNLNALGRA (120 aa). The Zn(2+) site is built by Cys4701, Cys4704, His4751, and Cys4754. In terms of domain architecture, UZI spans 4820–5098; sequence SRLRLLTYDI…QFVRSAIDKD (279 aa). The span at 4891 to 4903 shows a compositional bias: low complexity; sequence SSTSTATAPSSDS. Residues 4891–4915 are disordered; sequence SSTSTATAPSSDSRPLTPGSQLSST.

The protein belongs to the UBR4 family. In terms of tissue distribution, constitutively expressed in roots, rosette leaves, inflorescence stems, and flowers. Present in inflorescence meristems, floral meristems and vascular tissues.

It is found in the membrane. In terms of biological role, required for auxin efflux and polar auxin transport (PAT) influencing auxin-mediated developmental responses (e.g. cell elongation, apical dominance, lateral root production, inflorescence architecture, general growth and development). Controls the elongation of the pedicels and stem internodes through auxin action. Involved in the expression modulation of light-regulated genes. Represses CAB1 and CAB3 genes expression in etiolated seedlings. Confers sensitivity to the auxin transport inhibitors N-1-naphthylphthalamic acid (NPA), 2-carboxyphenyl-3-phenylpropane-l,2-dione (CPD), and methyl-2-chloro-9-hydroxyfluorene-9-carboxylate (CFM). Influences the polarized subcellular distribution of the auxin transporter PIN1 in response to auxin transport inhibitors. Plays a role in the regulation of responses to phytohormones such as auxin, cytokinins, ethylene and gibberellic acid (GA), particularly during light-mediated stimuli (e.g. shade ovoidance, etiolation). Required for pericycle cell activation to form lateral root primordia (LRP) in both high and low phosphate P conditions. Necessary for the plant-growth promotion and lateral root development mediated by the fungus Trichoderma virens. This is Auxin transport protein BIG (BIG) from Arabidopsis thaliana (Mouse-ear cress).